The sequence spans 425 residues: Enolase (425 aa).

Gln162 is a (2R)-2-phosphoglycerate binding site. Glu204 acts as the Proton donor in catalysis. 3 residues coordinate Mg(2+): Asp241, Glu282, and Asp309. Residues Lys334, Arg363, Ser364, and Lys385 each contribute to the (2R)-2-phosphoglycerate site. The active-site Proton acceptor is Lys334.

It belongs to the enolase family. The cofactor is Mg(2+).

Its subcellular location is the cytoplasm. The protein localises to the secreted. The protein resides in the cell surface. It catalyses the reaction (2R)-2-phosphoglycerate = phosphoenolpyruvate + H2O. Its pathway is carbohydrate degradation; glycolysis; pyruvate from D-glyceraldehyde 3-phosphate: step 4/5. Its function is as follows. Catalyzes the reversible conversion of 2-phosphoglycerate (2-PG) into phosphoenolpyruvate (PEP). It is essential for the degradation of carbohydrates via glycolysis. The chain is Enolase from Corynebacterium urealyticum (strain ATCC 43042 / DSM 7109).